A 641-amino-acid chain; its full sequence is Acetyl-coenzyme A synthetase (641 aa).

Residues 186-189 (RGGK) and Thr-304 contribute to the CoA site. ATP contacts are provided by residues 380–382 (GEP), 404–409 (DTWWQT), Asp-493, and Arg-508. Residue Ser-516 participates in CoA binding. Arg-519 is a binding site for ATP. Mg(2+) is bound by residues Val-530, His-532, and Ile-535. Lys-602 is subject to N6-acetyllysine.

The protein belongs to the ATP-dependent AMP-binding enzyme family. The cofactor is Mg(2+). Post-translationally, acetylated. Deacetylation by the SIR2-homolog deacetylase activates the enzyme.

The enzyme catalyses acetate + ATP + CoA = acetyl-CoA + AMP + diphosphate. Its function is as follows. Catalyzes the conversion of acetate into acetyl-CoA (AcCoA), an essential intermediate at the junction of anabolic and catabolic pathways. AcsA undergoes a two-step reaction. In the first half reaction, AcsA combines acetate with ATP to form acetyl-adenylate (AcAMP) intermediate. In the second half reaction, it can then transfer the acetyl group from AcAMP to the sulfhydryl group of CoA, forming the product AcCoA. The polypeptide is Acetyl-coenzyme A synthetase (Gamma-proteobacterium EBAC31A08).